Consider the following 218-residue polypeptide: Protein-methionine-sulfoxide reductase heme-binding subunit MsrQ (218 aa).

Transmembrane regions (helical) follow at residues 14-34, 60-80, 86-106, 121-141, and 155-175; these read AVHAAVLAPIALLGWQFWQVW, LLLITLAITPLRQLTGQAVLI, LGLYAFFYASVHLTAYLWLDL, PYITVGFTAWLLLVPLAITST, and LHMLIYPIGLLAVLHFWWLVK.

Belongs to the MsrQ family. Heterodimer of a catalytic subunit (MsrP) and a heme-binding subunit (MsrQ). FMN serves as cofactor. Requires heme b as cofactor.

It localises to the cell inner membrane. Part of the MsrPQ system that repairs oxidized periplasmic proteins containing methionine sulfoxide residues (Met-O), using respiratory chain electrons. Thus protects these proteins from oxidative-stress damage caused by reactive species of oxygen and chlorine generated by the host defense mechanisms. MsrPQ is essential for the maintenance of envelope integrity under bleach stress, rescuing a wide series of structurally unrelated periplasmic proteins from methionine oxidation. MsrQ provides electrons for reduction to the reductase catalytic subunit MsrP, using the quinone pool of the respiratory chain. In Xanthomonas campestris pv. campestris (strain 8004), this protein is Protein-methionine-sulfoxide reductase heme-binding subunit MsrQ.